Consider the following 174-residue polypeptide: NADH-ubiquinone oxidoreductase chain 6 (174 aa).

The next 5 helical transmembrane spans lie at 4–24 (LIIMTICLIISFIFMQMKHPL), 25–45 (SMGLMLLTQTFLTCLLTGIYV), 48–68 (FWFSYVLFLIFLGGMLILFIY), 82–102 (FNLTTLSLLIFFLMTLFFFII), and 143–163 (LITLLLINYLFLTLLVTVKIT).

It belongs to the complex I subunit 6 family.

The protein localises to the mitochondrion membrane. It catalyses the reaction a ubiquinone + NADH + 5 H(+)(in) = a ubiquinol + NAD(+) + 4 H(+)(out). Core subunit of the mitochondrial membrane respiratory chain NADH dehydrogenase (Complex I) that is believed to belong to the minimal assembly required for catalysis. Complex I functions in the transfer of electrons from NADH to the respiratory chain. The immediate electron acceptor for the enzyme is believed to be ubiquinone. This Anopheles quadrimaculatus (Common malaria mosquito) protein is NADH-ubiquinone oxidoreductase chain 6 (ND6).